Reading from the N-terminus, the 153-residue chain is Ribosome maturation factor RimP (153 aa).

This sequence belongs to the RimP family.

It localises to the cytoplasm. Its function is as follows. Required for maturation of 30S ribosomal subunits. This Trichormus variabilis (strain ATCC 29413 / PCC 7937) (Anabaena variabilis) protein is Ribosome maturation factor RimP.